A 539-amino-acid polypeptide reads, in one-letter code: MAKTLLFGEEARRSMQAGVDKLANTVKVTLGPKGRNVILDKKFGSPLITNDGVTIAREIELEDAYENMGAQLVKEVATKTNDVAGDGTTTATLLAQAIIREGLKNVTAGANPILIRNGIKTAVEKAVEEIQKISKPVNGKEDIARVAAISAADEKIGKLIADAMEKVGNEGVITVEESKSMGTELDVVEGMQFDRGYVSAYMVTDTEKMEAVLDNPLVLITDKKISNIQDLLPLLEQIVQAGKKLLIIADDIEGEAMTTLVVNKLRGTFTCVGVKAPGFGDRRKEMLQDIATLTGGVVISDEVGGDLKEATLDMLGEAESVKVTKESTTIVNGRGNSEEIKNRINQIKLQLEATTSEFDKEKLQERLAKLAGGVAVVKVGAATETELKESKLRIEDALAATKAAVEEGIVPGGGTAYVNVINEVAKLTSDIQDEQVGINIIVRSLEEPMRQIAHNAGLEGSVIIEKVKNSDAGVGFDALRGEYKDMIKAGIVDPTKVTRSALQNAASVASTFLTTEAAVADIPEKEMPQGAGMGMDGMY.

ATP is bound by residues 29–32, 86–90, glycine 413, 477–479, and aspartate 493; these read TLGP, DGTTT, and DAL.

It belongs to the chaperonin (HSP60) family. As to quaternary structure, forms a cylinder of 14 subunits composed of two heptameric rings stacked back-to-back. Interacts with the co-chaperonin GroES.

Its subcellular location is the cytoplasm. The catalysed reaction is ATP + H2O + a folded polypeptide = ADP + phosphate + an unfolded polypeptide.. Its function is as follows. Together with its co-chaperonin GroES, plays an essential role in assisting protein folding. The GroEL-GroES system forms a nano-cage that allows encapsulation of the non-native substrate proteins and provides a physical environment optimized to promote and accelerate protein folding. The sequence is that of Chaperonin GroEL from Clostridium perfringens (strain ATCC 13124 / DSM 756 / JCM 1290 / NCIMB 6125 / NCTC 8237 / Type A).